A 455-amino-acid chain; its full sequence is Probable glycine dehydrogenase (decarboxylating) subunit 1 (455 aa).

It belongs to the GcvP family. N-terminal subunit subfamily. As to quaternary structure, the glycine cleavage system is composed of four proteins: P, T, L and H. In this organism, the P 'protein' is a heterodimer of two subunits.

It catalyses the reaction N(6)-[(R)-lipoyl]-L-lysyl-[glycine-cleavage complex H protein] + glycine + H(+) = N(6)-[(R)-S(8)-aminomethyldihydrolipoyl]-L-lysyl-[glycine-cleavage complex H protein] + CO2. Its function is as follows. The glycine cleavage system catalyzes the degradation of glycine. The P protein binds the alpha-amino group of glycine through its pyridoxal phosphate cofactor; CO(2) is released and the remaining methylamine moiety is then transferred to the lipoamide cofactor of the H protein. The polypeptide is Probable glycine dehydrogenase (decarboxylating) subunit 1 (Francisella philomiragia subsp. philomiragia (strain ATCC 25017 / CCUG 19701 / FSC 153 / O#319-036)).